Here is a 557-residue protein sequence, read N- to C-terminus: Aerobic glycerol-3-phosphate dehydrogenase (557 aa).

Residue 21–49 (DLVIIGGGITGAGIALDASERGMKVALVE) coordinates FAD.

This sequence belongs to the FAD-dependent glycerol-3-phosphate dehydrogenase family. It depends on FAD as a cofactor.

Its subcellular location is the cytoplasm. The catalysed reaction is a quinone + sn-glycerol 3-phosphate = dihydroxyacetone phosphate + a quinol. It participates in polyol metabolism; glycerol degradation via glycerol kinase pathway; glycerone phosphate from sn-glycerol 3-phosphate (aerobic route): step 1/1. This chain is Aerobic glycerol-3-phosphate dehydrogenase (glpD), found in Staphylococcus aureus (strain MRSA252).